We begin with the raw amino-acid sequence, 369 residues long: S-(hydroxymethyl)glutathione dehydrogenase (369 aa).

Positions 40, 62, 92, 95, 98, 106, and 169 each coordinate Zn(2+).

It belongs to the zinc-containing alcohol dehydrogenase family. Class-III subfamily. As to quaternary structure, homodimer. Zn(2+) serves as cofactor.

Its subcellular location is the cytoplasm. The enzyme catalyses S-(hydroxymethyl)glutathione + NADP(+) = S-formylglutathione + NADPH + H(+). It catalyses the reaction S-(hydroxymethyl)glutathione + NAD(+) = S-formylglutathione + NADH + H(+). It carries out the reaction a primary alcohol + NAD(+) = an aldehyde + NADH + H(+). The catalysed reaction is a secondary alcohol + NAD(+) = a ketone + NADH + H(+). The enzyme catalyses S-nitrosoglutathione + NADH + H(+) = S-(hydroxysulfenamide)glutathione + NAD(+). Has high formaldehyde dehydrogenase activity in the presence of glutathione and catalyzes the oxidation of normal alcohols in a reaction that is not GSH-dependent. In addition, hemithiolacetals other than those formed from GSH, including omega-thiol fatty acids, also are substrates. Also acts as a S-nitroso-glutathione reductase by catalyzing the NADH-dependent reduction of S-nitrosoglutathione. This is S-(hydroxymethyl)glutathione dehydrogenase (frmA) from Escherichia coli (strain ATCC 8739 / DSM 1576 / NBRC 3972 / NCIMB 8545 / WDCM 00012 / Crooks).